Consider the following 198-residue polypeptide: Angiopoietin-like protein 8 (198 aa).

Positions 1-15 (MAVLALCLLWTLASA) are cleaved as a signal peptide.

Belongs to the ANGPTL8 family. Interacts with ANGPTL3. Post-translationally, proteolytically cleaved at the N-terminus. Expressed in liver and fat. Enriched in white and brown adipose tissues.

It is found in the secreted. Its function is as follows. Hormone that acts as a blood lipid regulator by regulating serum triglyceride levels. May be involved in the metabolic transition between fasting and refeeding: required to direct fatty acids to adipose tissue for storage in the fed state. According to a report, may act by promoting ANGPTL3 cleavage. According to another study, not required for cleavage of ANGPTL3. This Mus musculus (Mouse) protein is Angiopoietin-like protein 8.